Reading from the N-terminus, the 1463-residue chain is Chitin binding domain (ChtBD2) containing chtb-1 (1463 aa).

The first 17 residues, 1-17, serve as a signal peptide directing secretion; it reads MLRNLILITLLVASGHG. The segment at 70 to 99 is disordered; that stretch reads SSVPSVPAENTQPQQHPKARKPASPNICEQ. Residues 94-164 form the Chitin-binding type-2 domain; that stretch reads PNICEQDNGA…IVPKRMSSLS (71 aa). A disulfide bond links cysteine 141 and cysteine 154. Disordered stretches follow at residues 720–773 and 841–869; these read IDSD…DFPI and KNPK…FPDS. Residues 722–734 are compositionally biased toward polar residues; that stretch reads SDTNSTTNPSQPE. Basic residues-rich tracts occupy residues 740-756 and 843-853; these read NNTK…KPKK and PKKRKTKRRKQ.

In Caenorhabditis elegans, this protein is Chitin binding domain (ChtBD2) containing chtb-1.